The following is a 264-amino-acid chain: 3-methyl-2-oxobutanoate hydroxymethyltransferase (264 aa).

Residues aspartate 45 and aspartate 84 each coordinate Mg(2+). Residues 45 to 46 (DS), aspartate 84, and lysine 112 each bind 3-methyl-2-oxobutanoate. Glutamate 114 is a Mg(2+) binding site. Glutamate 181 functions as the Proton acceptor in the catalytic mechanism.

The protein belongs to the PanB family. In terms of assembly, homodecamer; pentamer of dimers. It depends on Mg(2+) as a cofactor.

The protein localises to the cytoplasm. The catalysed reaction is 3-methyl-2-oxobutanoate + (6R)-5,10-methylene-5,6,7,8-tetrahydrofolate + H2O = 2-dehydropantoate + (6S)-5,6,7,8-tetrahydrofolate. The protein operates within cofactor biosynthesis; (R)-pantothenate biosynthesis; (R)-pantoate from 3-methyl-2-oxobutanoate: step 1/2. Its function is as follows. Catalyzes the reversible reaction in which hydroxymethyl group from 5,10-methylenetetrahydrofolate is transferred onto alpha-ketoisovalerate to form ketopantoate. The protein is 3-methyl-2-oxobutanoate hydroxymethyltransferase of Escherichia coli O7:K1 (strain IAI39 / ExPEC).